An 825-amino-acid polypeptide reads, in one-letter code: PR domain zinc finger protein 1 (825 aa).

One can recognise an SET domain in the interval 84 to 201 (PRNLLFKYAT…ANQELLVWYC (118 aa)). Positions 324-361 (ITRSPIPSSTTPSPSARSSPDQSLKSSSPHSSPGNTVS) are enriched in low complexity. Positions 324-369 (ITRSPIPSSTTPSPSARSSPDQSLKSSSPHSSPGNTVSPVGPGSQE) are disordered. Residues 527–574 (HVVQPKATSAAMAAPSSDEAMNLIKNKRNMTGYKTLPYPLKKQNGKIK) form an interaction with PIAS1 region. 4 C2H2-type zinc fingers span residues 575–597 (YECNVCAKTFGQLSNLKVHLRVH), 603–625 (FKCQTCNKGFTQLAHLQKHYLVH), 631–653 (HECQVCHKRFSSTSNLKTHLRLH), and 659–681 (YQCKVCPAKFTQFVHLKLHKRLH). Lys-816 is covalently cross-linked (Glycyl lysine isopeptide (Lys-Gly) (interchain with G-Cter in SUMO1); alternate). Lys-816 is covalently cross-linked (Glycyl lysine isopeptide (Lys-Gly) (interchain with G-Cter in SUMO2); alternate).

The protein belongs to the class V-like SAM-binding methyltransferase superfamily. As to quaternary structure, interacts with PRMT5. Interacts with FBXO10. Interacts with FBXO11. Interacts with multiple nuclear sumoylation E3 ligases, including CBX4, PIAS1, PIAS2, PIAS3, PIAS4, PML and RNF4, but not RANBP2. Interacts with LDB1, SMARCD3 and SMARCC1. Interacts with EEIG1; following TNFSF11/RANKL stimulation in bone marrow-derived macrophages, the interaction promotes the binding of PRDM1/BLIMP1 to the gene promoter of IRF8. Sumoylation at Lys-816 by PIAS1 augments transcriptional repressor activity, and is critical for plasma cell differentiation. Can be sumoylated with SUMO1 and SUMO2 by PML. Degradation of the wild-type protein mostly depends upon sumoylation, rather than ubiquitination. Desumoylated by SENP1 and SENP6. Post-translationally, ubiquitinated by the SCF(FBXO11) complex, leading to its degradation by the proteasome.

It is found in the nucleus. It localises to the cytoplasm. In terms of biological role, transcription factor that mediates a transcriptional program in various innate and adaptive immune tissue-resident lymphocyte T cell types such as tissue-resident memory T (Trm), natural killer (trNK) and natural killer T (NKT) cells and negatively regulates gene expression of proteins that promote the egress of tissue-resident T-cell populations from non-lymphoid organs. Plays a role in the development, retention and long-term establishment of adaptive and innate tissue-resident lymphocyte T cell types in non-lymphoid organs, such as the skin and gut, but also in other nonbarrier tissues like liver and kidney, and therefore may provide immediate immunological protection against reactivating infections or viral reinfection. Binds specifically to the PRDI element in the promoter of the beta-interferon gene. Drives the maturation of B-lymphocytes into Ig secreting cells. Associates with the transcriptional repressor ZNF683 to chromatin at gene promoter regions. Binds to the promoter and acts as a transcriptional repressor of IRF8, thereby promotes transcription of osteoclast differentiation factors such as NFATC1 and EEIG1. This Homo sapiens (Human) protein is PR domain zinc finger protein 1 (PRDM1).